A 183-amino-acid polypeptide reads, in one-letter code: Ferredoxin-2, mitochondrial (183 aa).

The transit peptide at 1-52 directs the protein to the mitochondrion; sequence MAASVAWGGVNAGFLLRAARGAWWSRPGGFWGSGEAAAPAIARKFRATGSRP. The 2Fe-2S ferredoxin-type domain maps to 68–170; it reads VNVVFVDRSG…GAEFTLPKIT (103 aa). Positions 105, 111, 114, and 151 each coordinate [2Fe-2S] cluster.

It belongs to the adrenodoxin/putidaredoxin family. As to quaternary structure, component of the mitochondrial core iron-sulfur cluster (ISC) complex composed of NFS1, LYRM4, NDUFAB1, ISCU, FXN, and FDX2; this complex is a heterohexamer containing two copies of each monomer. Form a heterodimer complex with NFS1. Interacts (in both their reduced and oxidized states) with the cysteine desulfurase (NFS1:LYRM4) complex; this interaction stimulates cysteine desulfurase activity, and serves as a reductant for Fe-S cluster assembly. It depends on [2Fe-2S] cluster as a cofactor.

Its subcellular location is the mitochondrion. It is found in the mitochondrion matrix. Electron donor, of the core iron-sulfur cluster (ISC) assembly complex, that acts to reduce the persulfide into sulfide during [2Fe-2S] clusters assembly on the scaffolding protein ISCU. The core iron-sulfur cluster (ISC) assembly complex is involved in the de novo synthesis of a [2Fe-2S] cluster, the first step of the mitochondrial iron-sulfur protein biogenesis. This process is initiated by the cysteine desulfurase complex (NFS1:LYRM4:NDUFAB1) that produces persulfide which is delivered on the scaffold protein ISCU in a FXN-dependent manner. Then this complex is stabilized by FDX2 which provides reducing equivalents to accomplish the [2Fe-2S] cluster assembly. Finally, the [2Fe-2S] cluster is transferred from ISCU to chaperone proteins, including HSCB, HSPA9 and GLRX5. Essential for coenzyme Q biosynthesis: together with FDXR, transfers the electrons required for the hydroxylation reaction performed by COQ6. The sequence is that of Ferredoxin-2, mitochondrial from Bos taurus (Bovine).